Consider the following 670-residue polypeptide: Kinesin-like protein KIF2B (670 aa).

Thr122 bears the Phosphothreonine; by PLK1 mark. A coiled-coil region spans residues 146–173 (CLQEIEKVQKQREKRRRLQQEIRARRAL). Ser201 is modified (phosphoserine; by PLK1). The region spanning 210–540 (RICVCVRKRP…LRYANRVKEL (331 aa)) is the Kinesin motor domain. 300–307 (GQTGSGKT) provides a ligand contact to ATP.

It belongs to the TRAFAC class myosin-kinesin ATPase superfamily. Kinesin family. MCAK/KIF2 subfamily. Post-translationally, phosphorylation at Thr-122 by PLK1 is required for activity in the correction of kinetochore-microtubules attachment errors, while phosphorylation at Ser-201 also by PLK1 is required for the kinetochore localization and activity in prometaphase.

It is found in the cytoplasm. The protein resides in the cytoskeleton. The protein localises to the microtubule organizing center. It localises to the centrosome. Its subcellular location is the spindle. It is found in the chromosome. The protein resides in the centromere. The protein localises to the kinetochore. Plus end-directed microtubule-dependent motor required for spindle assembly and chromosome movement during mitosis. Has microtubule depolymerization activity. Plays a role in chromosome congression. This Macaca fascicularis (Crab-eating macaque) protein is Kinesin-like protein KIF2B (KIF2B).